A 440-amino-acid polypeptide reads, in one-letter code: D-serine dehydratase (440 aa).

Lysine 116 bears the N6-(pyridoxal phosphate)lysine mark.

The protein belongs to the serine/threonine dehydratase family. DsdA subfamily. Monomer. Pyridoxal 5'-phosphate serves as cofactor.

It catalyses the reaction D-serine = pyruvate + NH4(+). This Salmonella arizonae (strain ATCC BAA-731 / CDC346-86 / RSK2980) protein is D-serine dehydratase.